A 254-amino-acid polypeptide reads, in one-letter code: 3-deoxy-manno-octulosonate cytidylyltransferase (254 aa).

This sequence belongs to the KdsB family.

It is found in the cytoplasm. The enzyme catalyses 3-deoxy-alpha-D-manno-oct-2-ulosonate + CTP = CMP-3-deoxy-beta-D-manno-octulosonate + diphosphate. Its pathway is nucleotide-sugar biosynthesis; CMP-3-deoxy-D-manno-octulosonate biosynthesis; CMP-3-deoxy-D-manno-octulosonate from 3-deoxy-D-manno-octulosonate and CTP: step 1/1. The protein operates within bacterial outer membrane biogenesis; lipopolysaccharide biosynthesis. Its function is as follows. Activates KDO (a required 8-carbon sugar) for incorporation into bacterial lipopolysaccharide in Gram-negative bacteria. The sequence is that of 3-deoxy-manno-octulosonate cytidylyltransferase from Pseudomonas syringae pv. tomato (strain ATCC BAA-871 / DC3000).